Consider the following 422-residue polypeptide: Serpin A11 (422 aa).

An N-terminal signal peptide occupies residues 1–24 (MGPVWLWLLIAELLLPVHYQPSSA). The interval 25 to 45 (HGDKSLGAPQPASHQSLEPAP) is disordered. 4 N-linked (GlcNAc...) asparagine glycosylation sites follow: N106, N169, N350, and N385.

The protein belongs to the serpin family.

It is found in the secreted. The polypeptide is Serpin A11 (Serpina11) (Rattus norvegicus (Rat)).